The following is a 484-amino-acid chain: Ribosomal protein uS12 methylthiotransferase RimO (484 aa).

The MTTase N-terminal domain occupies 8–119 (RRVAMVTLGC…LAERLDDVLA (112 aa)). Residues Cys17, Cys53, Cys82, Cys184, Cys188, and Cys191 each coordinate [4Fe-4S] cluster. Residues 170-401 (LDDSPLAALK…ALADELVAQR (232 aa)) enclose the Radical SAM core domain. One can recognise a TRAM domain in the interval 403–469 (EDRVGTEVRV…GVDLVVRPVG (67 aa)).

The protein belongs to the methylthiotransferase family. RimO subfamily. Requires [4Fe-4S] cluster as cofactor.

The protein localises to the cytoplasm. The catalysed reaction is L-aspartate(89)-[ribosomal protein uS12]-hydrogen + (sulfur carrier)-SH + AH2 + 2 S-adenosyl-L-methionine = 3-methylsulfanyl-L-aspartate(89)-[ribosomal protein uS12]-hydrogen + (sulfur carrier)-H + 5'-deoxyadenosine + L-methionine + A + S-adenosyl-L-homocysteine + 2 H(+). In terms of biological role, catalyzes the methylthiolation of an aspartic acid residue of ribosomal protein uS12. The chain is Ribosomal protein uS12 methylthiotransferase RimO from Saccharopolyspora erythraea (strain ATCC 11635 / DSM 40517 / JCM 4748 / NBRC 13426 / NCIMB 8594 / NRRL 2338).